The sequence spans 748 residues: Structure-specific endonuclease subunit SLX4 (748 aa).

Residues 50-102 (LSSDDDSISTQVKSVTAQKSPITQETTKNDTERNKDVDKSCNPVSTSQPDLGE) form a disordered region. The segment covering 57 to 75 (ISTQVKSVTAQKSPITQET) has biased composition (polar residues). T72 is modified (phosphothreonine; by ATR and ATM). A compositionally biased stretch (basic and acidic residues) spans 76-88 (TKNDTERNKDVDK). At T113 the chain carries Phosphothreonine; by ATR and ATM. Disordered stretches follow at residues 215–236 (IKTQNEGNSDKPPRARNNKGEK) and 277–303 (EKSSSSLDNQESSQQRLWTASQLPPEL). A compositionally biased stretch (basic and acidic residues) spans 222-236 (NSDKPPRARNNKGEK). Positions 277–291 (EKSSSSLDNQESSQQ) are enriched in low complexity. S289 carries the post-translational modification Phosphoserine; by ATR and ATM. T319 is modified (phosphothreonine; by ATR and ATM). Phosphoserine; by ATR and ATM is present on residues S329 and S355.

The protein belongs to the SLX4 family. Forms a heterodimer with SLX1. Interacts with RAD1; catalytic subunit of the RAD1-RAD10 endonuclease. Interacts with RTT107. Phosphorylated by ATR (MEC1) and ATM (TEL1) upon DNA damage. This appears to be required for the function with the RAD1-RAD10 endonuclease.

The protein resides in the nucleus. The protein localises to the cytoplasm. Functionally, regulatory subunit that interacts with and increases the activity of different structure-specific endonucleases. Has several distinct roles in protecting genome stability by resolving diverse forms of deleterious DNA structures. Component of the SLX1-SLX4 structure-specific endonuclease that resolves DNA secondary structures generated during DNA repair and recombination. Has endonuclease activity towards branched DNA substrates, introducing single-strand cuts in duplex DNA close to junctions with ss-DNA. Has a preference for simple Y, 5'-flap and replication fork-like structures. It cleaves the strand bearing the 5'-non-homologous arm at the branch site junction and generates ligatable, nicked products from the 5'-flap or replication fork substrates. Plays a critical role in maintaining the integrity of the ribosomal DNA (rDNA) loci, where it has a role in re-starting stalled replication forks. Has Holliday junction resolvase activity in vitro. Interacts with the structure-specific RAD1-RAD10 endonuclease and promotes RAD1-RAD10-dependent 3'-non-homologous tail removal (NHTR) during repair of double-strand breaks by single-strand annealing. SLX4 also promotes recovery from DNA-alkylation-induced replisome stalling during DNA replication by facilitating the error-free mode of lesion bypass. This does not require SLX1 or RAD1-RAD10, but probably RTT107. This Saccharomyces cerevisiae (strain YJM789) (Baker's yeast) protein is Structure-specific endonuclease subunit SLX4.